The primary structure comprises 290 residues: Acetyl-coenzyme A carboxylase carboxyl transferase subunit beta (290 aa).

Residues 27 to 290 (LWVKCPSCEA…LQRQPADALA (264 aa)) enclose the CoA carboxyltransferase N-terminal domain. 4 residues coordinate Zn(2+): Cys-31, Cys-34, Cys-50, and Cys-53. The C4-type zinc-finger motif lies at 31-53 (CPSCEAVLYRNDVDANLHVCPKC).

Belongs to the AccD/PCCB family. Acetyl-CoA carboxylase is a heterohexamer composed of biotin carboxyl carrier protein (AccB), biotin carboxylase (AccC) and two subunits each of ACCase subunit alpha (AccA) and ACCase subunit beta (AccD). The cofactor is Zn(2+).

The protein resides in the cytoplasm. The enzyme catalyses N(6)-carboxybiotinyl-L-lysyl-[protein] + acetyl-CoA = N(6)-biotinyl-L-lysyl-[protein] + malonyl-CoA. The protein operates within lipid metabolism; malonyl-CoA biosynthesis; malonyl-CoA from acetyl-CoA: step 1/1. In terms of biological role, component of the acetyl coenzyme A carboxylase (ACC) complex. Biotin carboxylase (BC) catalyzes the carboxylation of biotin on its carrier protein (BCCP) and then the CO(2) group is transferred by the transcarboxylase to acetyl-CoA to form malonyl-CoA. The protein is Acetyl-coenzyme A carboxylase carboxyl transferase subunit beta of Burkholderia multivorans (strain ATCC 17616 / 249).